Here is an 816-residue protein sequence, read N- to C-terminus: uncharacterized protein (816 aa).

Disordered regions lie at residues 1-81 and 391-411; these read MDVV…NSNN and LGSNSSTNENDSNDHDSNNDF. Positions 28–44 are enriched in low complexity; that stretch reads EVPPQRPRQQNRWKPWW. The segment covering 64–81 has biased composition (polar residues); sequence QGRSSPTTDFQDSVNSNN. Phosphoserine occurs at positions 76 and 79. Residues 391–400 show a composition bias toward low complexity; the sequence is LGSNSSTNEN.

This is an uncharacterized protein from Saccharomyces cerevisiae (strain ATCC 204508 / S288c) (Baker's yeast).